Reading from the N-terminus, the 527-residue chain is Ribosomal protein S6 kinase beta-1 (527 aa).

The disordered stretch occupies residues 1-54 (MRRRRRRDGFYPAPDFRDREAEDMAGVFDIDLDQPEDAGSEDELEEGGQLNESM). The TOS motif signature appears at 28–32 (FDIDL). Residues 30–46 (IDLDQPEDAGSEDELEE) are compositionally biased toward acidic residues. A Protein kinase domain is found at 91 to 352 (FELLRVLGKG…AGEVQAHPFF (262 aa)). Residues 97–105 (LGKGGYGKV) and lysine 123 contribute to the ATP site. Catalysis depends on aspartate 218, which acts as the Proton acceptor. Threonine 252 is modified (phosphothreonine; by PDPK1). One can recognise an AGC-kinase C-terminal domain in the interval 353-423 (RHINWEELLA…VAPSVLESVK (71 aa)). At serine 394 the chain carries Phosphoserine. Threonine 412 carries the phosphothreonine; by MTOR, NEK6 and NEK7 modification. The autoinhibitory domain stretch occupies residues 424–527 (EKFSFEPKIR…PEHLRMNLEL (104 aa)). Serine 434 and serine 441 each carry phosphoserine. Residue threonine 444 is modified to Phosphothreonine. Serine 447 and serine 452 each carry phosphoserine. An N6-acetyllysine modification is found at lysine 516.

It belongs to the protein kinase superfamily. AGC Ser/Thr protein kinase family. S6 kinase subfamily. As to quaternary structure, interacts with PPP1R9A/neurabin-1. Interacts with RPTOR. Interacts with IRS1. Interacts with EIF3B and EIF3C. Interacts with TRAF4. Interacts with POLDIP3. Interacts (via N-terminus) with IER5. Post-translationally, phosphorylation at Thr-412 is regulated by mTORC1. The phosphorylation at this site is maintained by an agonist-dependent autophosphorylation mechanism. Activated by phosphorylation at Thr-252 by PDPK1. Dephosphorylation by PPP1CC at Thr-412 in mitochondrion.

The protein localises to the cytoplasm. Its subcellular location is the synapse. The protein resides in the synaptosome. It is found in the mitochondrion outer membrane. It localises to the mitochondrion. The catalysed reaction is L-seryl-[protein] + ATP = O-phospho-L-seryl-[protein] + ADP + H(+). The enzyme catalyses L-threonyl-[protein] + ATP = O-phospho-L-threonyl-[protein] + ADP + H(+). Inactivated by binding to URI1. Activation requires multiple phosphorylation events on serine/threonine residues. Activation appears to be first mediated by phosphorylation of multiple sites in the autoinhibitory domain, which facilitates phosphorylation at Thr-412, disrupting the autoinhibitory mechanism and allowing phosphorylation of Thr-252 by PDPK1. The active conformation of the kinase is believed to be stabilized by a mechanism involving three conserved phosphorylation sites located in the kinase domain activation loop (Thr-252) and in the AGC-kinase C-terminal domain (Ser-394 in the middle of the tail/linker region and Thr-412 within a hydrophobic motif at its end). Activated by mTORC1; isoform Alpha I and isoform Alpha II are sensitive to rapamycin, which inhibits activating phosphorylation at Thr-412. Activated by PDPK1. Its function is as follows. Serine/threonine-protein kinase that acts downstream of mTOR signaling in response to growth factors and nutrients to promote cell proliferation, cell growth and cell cycle progression. Regulates protein synthesis through phosphorylation of EIF4B, RPS6 and EEF2K, and contributes to cell survival by repressing the pro-apoptotic function of BAD. Under conditions of nutrient depletion, the inactive form associates with the EIF3 translation initiation complex. Upon mitogenic stimulation, phosphorylation by the mechanistic target of rapamycin complex 1 (mTORC1) leads to dissociation from the EIF3 complex and activation. The active form then phosphorylates and activates several substrates in the pre-initiation complex, including the EIF2B complex and the cap-binding complex component EIF4B. Also controls translation initiation by phosphorylating a negative regulator of EIF4A, PDCD4, targeting it for ubiquitination and subsequent proteolysis. Promotes initiation of the pioneer round of protein synthesis by phosphorylating POLDIP3/SKAR. In response to IGF1, activates translation elongation by phosphorylating EEF2 kinase (EEF2K), which leads to its inhibition and thus activation of EEF2. Also plays a role in feedback regulation of mTORC2 by mTORC1 by phosphorylating MAPKAP1/SIN1, MTOR and RICTOR, resulting in the inhibition of mTORC2 and AKT1 signaling. Also involved in feedback regulation of mTORC1 and mTORC2 by phosphorylating DEPTOR. Mediates cell survival by phosphorylating the pro-apoptotic protein BAD and suppressing its pro-apoptotic function. Phosphorylates mitochondrial URI1 leading to dissociation of a URI1-PPP1CC complex. The free mitochondrial PPP1CC can then dephosphorylate RPS6KB1 at Thr-412, which is proposed to be a negative feedback mechanism for the RPS6KB1 anti-apoptotic function. Mediates TNF-alpha-induced insulin resistance by phosphorylating IRS1 at multiple serine residues, resulting in accelerated degradation of IRS1. In cells lacking functional TSC1-2 complex, constitutively phosphorylates and inhibits GSK3B. May be involved in cytoskeletal rearrangement through binding to neurabin. Phosphorylates and activates the pyrimidine biosynthesis enzyme CAD, downstream of MTOR. Following activation by mTORC1, phosphorylates EPRS and thereby plays a key role in fatty acid uptake by adipocytes and also most probably in interferon-gamma-induced translation inhibition. The polypeptide is Ribosomal protein S6 kinase beta-1 (RPS6KB1) (Bos taurus (Bovine)).